A 448-amino-acid polypeptide reads, in one-letter code: Bifunctional protein GlmU (448 aa).

The segment at 1–232 is pyrophosphorylase; the sequence is MSDRSLLVVV…ADEVAGVNSR (232 aa). Residues 11–14, lysine 25, glutamine 78, and 83–84 contribute to the UDP-N-acetyl-alpha-D-glucosamine site; these read LAAG and GT. Aspartate 108 lines the Mg(2+) pocket. UDP-N-acetyl-alpha-D-glucosamine contacts are provided by glycine 144, glutamate 158, asparagine 173, and asparagine 230. Asparagine 230 lines the Mg(2+) pocket. Residues 233–253 are linker; it reads VQLAEAEAILQRRLRLAAMAG. Residues 254–448 are N-acetyltransferase; sequence GATLVAPETV…FRAARSKPKG (195 aa). Positions 319 and 337 each coordinate UDP-N-acetyl-alpha-D-glucosamine. Catalysis depends on histidine 349, which acts as the Proton acceptor. 2 residues coordinate UDP-N-acetyl-alpha-D-glucosamine: tyrosine 352 and asparagine 363. Residues alanine 366, 372 to 373, threonine 409, and arginine 426 contribute to the acetyl-CoA site; that span reads NY.

In the N-terminal section; belongs to the N-acetylglucosamine-1-phosphate uridyltransferase family. The protein in the C-terminal section; belongs to the transferase hexapeptide repeat family. Homotrimer. The cofactor is Mg(2+).

It localises to the cytoplasm. It catalyses the reaction alpha-D-glucosamine 1-phosphate + acetyl-CoA = N-acetyl-alpha-D-glucosamine 1-phosphate + CoA + H(+). The enzyme catalyses N-acetyl-alpha-D-glucosamine 1-phosphate + UTP + H(+) = UDP-N-acetyl-alpha-D-glucosamine + diphosphate. It participates in nucleotide-sugar biosynthesis; UDP-N-acetyl-alpha-D-glucosamine biosynthesis; N-acetyl-alpha-D-glucosamine 1-phosphate from alpha-D-glucosamine 6-phosphate (route II): step 2/2. Its pathway is nucleotide-sugar biosynthesis; UDP-N-acetyl-alpha-D-glucosamine biosynthesis; UDP-N-acetyl-alpha-D-glucosamine from N-acetyl-alpha-D-glucosamine 1-phosphate: step 1/1. The protein operates within bacterial outer membrane biogenesis; LPS lipid A biosynthesis. Catalyzes the last two sequential reactions in the de novo biosynthetic pathway for UDP-N-acetylglucosamine (UDP-GlcNAc). The C-terminal domain catalyzes the transfer of acetyl group from acetyl coenzyme A to glucosamine-1-phosphate (GlcN-1-P) to produce N-acetylglucosamine-1-phosphate (GlcNAc-1-P), which is converted into UDP-GlcNAc by the transfer of uridine 5-monophosphate (from uridine 5-triphosphate), a reaction catalyzed by the N-terminal domain. The protein is Bifunctional protein GlmU of Xanthobacter autotrophicus (strain ATCC BAA-1158 / Py2).